The primary structure comprises 446 residues: Ubiquitin carboxyl-terminal hydrolase MINDY-3 (446 aa).

The Nucleophile role is filled by Cys51. Over residues 117-128 (DNSDITDSHPEP) the composition is skewed to basic and acidic residues. The tract at residues 117–137 (DNSDITDSHPEPESSQPTDTP) is disordered. Residue His288 is the Proton acceptor of the active site.

Belongs to the MINDY deubiquitinase family. FAM188 subfamily.

Its subcellular location is the nucleus. The enzyme catalyses Thiol-dependent hydrolysis of ester, thioester, amide, peptide and isopeptide bonds formed by the C-terminal Gly of ubiquitin (a 76-residue protein attached to proteins as an intracellular targeting signal).. Functionally, hydrolase that can remove 'Lys-48'-linked conjugated ubiquitin from proteins. This Danio rerio (Zebrafish) protein is Ubiquitin carboxyl-terminal hydrolase MINDY-3 (mindy3).